The sequence spans 461 residues: V-type ATP synthase beta chain (461 aa).

Belongs to the ATPase alpha/beta chains family.

Its function is as follows. Produces ATP from ADP in the presence of a proton gradient across the membrane. The V-type beta chain is a regulatory subunit. This Clostridium botulinum (strain Langeland / NCTC 10281 / Type F) protein is V-type ATP synthase beta chain.